We begin with the raw amino-acid sequence, 120 residues long: U13-lycotoxin-Ls1a (120 aa).

An N-terminal signal peptide occupies residues 1–16 (MKILFVLISILYAVYC). The propeptide occupies 17–54 (FSSEEDVDSAYLANELEPVEDINSEQYAALEPKEEQER). Intrachain disulfides connect C56–C70, C63–C76, C69–C87, and C78–C85. One can recognise an Agouti domain in the interval 56–95 (CADMGQDCKDDCDCCLNIATCNCWFGRYFCSCTFGDYQTC).

It belongs to the neurotoxin 05 (agouti) family. In terms of processing, contains 6 disulfide bonds. In terms of tissue distribution, expressed by the venom gland.

Its subcellular location is the secreted. This chain is U13-lycotoxin-Ls1a, found in Lycosa singoriensis (Wolf spider).